Consider the following 114-residue polypeptide: Large ribosomal subunit protein uL22 (114 aa).

It belongs to the universal ribosomal protein uL22 family. As to quaternary structure, part of the 50S ribosomal subunit.

Functionally, this protein binds specifically to 23S rRNA; its binding is stimulated by other ribosomal proteins, e.g. L4, L17, and L20. It is important during the early stages of 50S assembly. It makes multiple contacts with different domains of the 23S rRNA in the assembled 50S subunit and ribosome. Its function is as follows. The globular domain of the protein is located near the polypeptide exit tunnel on the outside of the subunit, while an extended beta-hairpin is found that lines the wall of the exit tunnel in the center of the 70S ribosome. The sequence is that of Large ribosomal subunit protein uL22 from Streptococcus mutans serotype c (strain ATCC 700610 / UA159).